We begin with the raw amino-acid sequence, 174 residues long: Peptide deformylase (174 aa).

Cys96 and His138 together coordinate Fe cation. Glu139 is an active-site residue. His142 provides a ligand contact to Fe cation.

Belongs to the polypeptide deformylase family. Requires Fe(2+) as cofactor.

The enzyme catalyses N-terminal N-formyl-L-methionyl-[peptide] + H2O = N-terminal L-methionyl-[peptide] + formate. In terms of biological role, removes the formyl group from the N-terminal Met of newly synthesized proteins. Requires at least a dipeptide for an efficient rate of reaction. N-terminal L-methionine is a prerequisite for activity but the enzyme has broad specificity at other positions. In Helicobacter pylori (strain G27), this protein is Peptide deformylase.